A 528-amino-acid polypeptide reads, in one-letter code: Beta-galactoside alpha-2,6-sialyltransferase 2 (528 aa).

At 1–10 (MKPNLKQWKQ) the chain is on the cytoplasmic side. The chain crosses the membrane as a helical; Signal-anchor for type II membrane protein span at residues 11-31 (LMLFGIFAWGLLFLVIFIYFT). The Lumenal portion of the chain corresponds to 32–528 (DSNSAEPVPS…CPERNNFPPL (497 aa)). N-linked (GlcNAc...) asparagine glycosylation is found at asparagine 167, asparagine 308, and asparagine 338. Disulfide bonds link cysteine 254–cysteine 519, cysteine 297–cysteine 448, and cysteine 466–cysteine 477.

It belongs to the glycosyltransferase 29 family.

It localises to the golgi apparatus. It is found in the golgi stack membrane. The catalysed reaction is a beta-D-galactoside + CMP-N-acetyl-beta-neuraminate = an N-acetyl-alpha-neuraminyl-(2-&gt;6)-beta-D-galactosyl derivative + CMP + H(+). Functionally, transfers sialic acid from the donor of substrate CMP-sialic acid to galactose containing acceptor substrates. The polypeptide is Beta-galactoside alpha-2,6-sialyltransferase 2 (ST6GAL2) (Gallus gallus (Chicken)).